Reading from the N-terminus, the 232-residue chain is MAGDVGGRSCTDSELLLHPELLSQEFLLLTLEQKNITVENDMRVNKDSLTDLYVQHAIPLPQRDLPKSRWGKMMEKKREQHEIKKETKRSSPADGLRKRPLIVFDGSSTSTTIKVKKTENGDNDRLRPQPQASATSNTFRKSSDSSSSVSPLVLSSNLPTNNKMEHGNNDNKQNHDLTHRKSPLGPVRSPPLSPVGATPVKLKRAAPKEEAEASINLKPPEAKRKIQHVTWP.

Basic and acidic residues-rich tracts occupy residues 64–97 (DLPK…DGLR) and 116–127 (KKTENGDNDRLR). The segment at 64–232 (DLPKSRWGKM…KRKIQHVTWP (169 aa)) is disordered. Over residues 130 to 140 (PQASATSNTFR) the composition is skewed to polar residues. Ser143 is modified (phosphoserine). A compositionally biased stretch (low complexity) spans 144–156 (DSSSSVSPLVLSS). Residues 163-179 (KMEHGNNDNKQNHDLTH) are compositionally biased toward basic and acidic residues. Phosphoserine occurs at positions 182, 189, and 193. Thr198 is modified (phosphothreonine).

This sequence belongs to the ashwin family. In terms of assembly, component of the tRNA-splicing ligase complex.

It localises to the nucleus. The sequence is that of Ashwin from Bos taurus (Bovine).